The chain runs to 201 residues: FMN-dependent NADH:quinone oxidoreductase (201 aa).

FMN contacts are provided by residues S10, 16–18 (SQS), 96–99 (MYNF), and 140–143 (SRGG).

The protein belongs to the azoreductase type 1 family. Homodimer. It depends on FMN as a cofactor.

It catalyses the reaction 2 a quinone + NADH + H(+) = 2 a 1,4-benzosemiquinone + NAD(+). It carries out the reaction N,N-dimethyl-1,4-phenylenediamine + anthranilate + 2 NAD(+) = 2-(4-dimethylaminophenyl)diazenylbenzoate + 2 NADH + 2 H(+). In terms of biological role, quinone reductase that provides resistance to thiol-specific stress caused by electrophilic quinones. Also exhibits azoreductase activity. Catalyzes the reductive cleavage of the azo bond in aromatic azo compounds to the corresponding amines. This Shigella flexneri serotype 5b (strain 8401) protein is FMN-dependent NADH:quinone oxidoreductase.